We begin with the raw amino-acid sequence, 541 residues long: Protopine 6-monooxygenase (541 aa).

The helical transmembrane segment at 9-29 (LLLNTWISAYSMAALLALVLV) threads the bilayer. Cys476 is a heme binding site.

It belongs to the cytochrome P450 family. Requires heme as cofactor.

The protein localises to the endoplasmic reticulum membrane. The catalysed reaction is protopine + reduced [NADPH--hemoprotein reductase] + O2 = 6-hydroxyprotopine + oxidized [NADPH--hemoprotein reductase] + H2O + H(+). It functions in the pathway alkaloid biosynthesis. Catalyzes the conversion of protopine and allocryptopine to dihydrosanguinarine and dihydrochelerythrine, respectively, in the biosynthesis of isoquinoline alkaloid sanguinarine. The sequence is that of Protopine 6-monooxygenase (CYP82N3) from Papaver somniferum (Opium poppy).